The following is a 613-amino-acid chain: Ribosome-associated molecular chaperone SSB1 (613 aa).

The tract at residues 1-391 (MAEGVFSGAI…ILTGSNLSDD (391 aa)) is nucleotide binding domain (NBD). ATP-binding positions include 16–18 (TTY), Lys73, 205–207 (GGT), 271–278 (ERAKRTLS), and Gly342. The inter-domain linker stretch occupies residues 392-402 (TKDLLLLDVAP). The tract at residues 403–613 (LSLGVAMQGD…RVVTKAMATR (211 aa)) is substrate binding domain (SBD). Positions 516 to 612 (SEDIEKMVSQ…KRVVTKAMAT (97 aa)) are lid domain (SBDalpha). Positions 574-582 (VEAALADAF) match the Nuclear export signal motif.

It belongs to the heat shock protein 70 family. Ssb-type Hsp70 subfamily. Binds to ribosomes. Binds close to the ribosomal tunnel exit via contacts with both ribosomal proteins and rRNA. Directly interacts with nascent polypeptides. This interaction is dependent on the ribosome-associated complex (RAC). Interacts with SSE1. Interacts with FES1.

It is found in the cytoplasm. The enzyme catalyses ATP + H2O = ADP + phosphate + H(+). Functionally, ribosome-bound, Hsp70-type chaperone that assists in the cotranslational folding of newly synthesized proteins in the cytosol. Stimulates folding by interacting with nascent chains, binding to short, largely hydrophobic sequences exposed by unfolded proteins, thereby stabilizing longer, more slowly translated, and aggregation-prone nascent polypeptides and domains that cannot fold stably until fully synthesized. The Hsp70-protein substrate interaction depends on ATP-binding and on allosteric regulation between the NBD and the SBD. The ATP-bound state is characterized by a fast exchange rate of substrate (low affinity state), while in the ADP-bound state exchange is much slower (high affinity state). During the Hsp70 cycle, the chaperone switches between the ATP-bound state (open conformation) and the ADP-bound state (closed conformation) by major conformational rearrangements involving mainly the lid domain. Ssb cooperates with a specific Hsp40/Hsp70 co-chaperone termed the ribosome-associated complex (RAC), which stimulates the ATPase activity of the ribosome-associated pool of Ssbs and switches it to the high affinity substrate binding state. Hsp110 chaperone SSE1 and FES1 act as nucleotide exchange factors that cause substrate release. The chain is Ribosome-associated molecular chaperone SSB1 (SSB1) from Eremothecium gossypii (strain ATCC 10895 / CBS 109.51 / FGSC 9923 / NRRL Y-1056) (Yeast).